The primary structure comprises 132 residues: Putative F-box protein At4g05620 (132 aa).

One can recognise an F-box domain in the interval 17-63 (QKKSLSLPHDVLVSCLAHVSRLHYSILSLVLKNFRSLIASPELYKTR).

In Arabidopsis thaliana (Mouse-ear cress), this protein is Putative F-box protein At4g05620.